Reading from the N-terminus, the 801-residue chain is Ribosome biogenesis protein ERB1 (801 aa).

Disordered stretches follow at residues 1-135 (MGSK…LEDR) and 358-377 (PEYL…DPED). Residues 35-90 (SEDEEDYIPSSEVDEDDDDDADESASEDSDDSNDSEDDEVEEDDEALLSDEIPSEG) are compositionally biased toward acidic residues. Basic and acidic residues-rich tracts occupy residues 91–113 (ESEK…KEPS), 124–135 (PPRKEDEELEDR), and 362–377 (PTKE…DPED). WD repeat units lie at residues 451–490 (GHEG…QVWS) and 494–534 (NGDE…VTPA). The interval 546–570 (GFGHATNGKQQANLPPGKEPPGKWA) is disordered. 5 WD repeats span residues 586-628 (TVRS…TQIP), 631-669 (KLNG…LVKI), 672-711 (PGAK…RPYK), 715-755 (FHTE…DQLE), and 771-801 (VNKL…RLWM).

It belongs to the WD repeat BOP1/ERB1 family. In terms of assembly, component of the NOP7 complex, composed of ERB1, NOP7 and YTM1. The complex is held together by ERB1, which interacts with NOP7 via its N-terminal domain and with YTM1 via a high-affinity interaction between the seven-bladed beta-propeller domains of the 2 proteins. The NOP7 complex associates with the 66S pre-ribosome.

Its subcellular location is the nucleus. It is found in the nucleolus. It localises to the nucleoplasm. In terms of biological role, component of the NOP7 complex, which is required for maturation of the 25S and 5.8S ribosomal RNAs and formation of the 60S ribosome. The protein is Ribosome biogenesis protein ERB1 of Chaetomium thermophilum (strain DSM 1495 / CBS 144.50 / IMI 039719) (Thermochaetoides thermophila).